Reading from the N-terminus, the 188-residue chain is Photosystem I assembly protein Ycf4 (188 aa).

Transmembrane regions (helical) follow at residues 26–46 and 68–88; these read YFWA…GLSS and LVMG…WFVI.

This sequence belongs to the Ycf4 family.

It localises to the cellular thylakoid membrane. In terms of biological role, seems to be required for the assembly of the photosystem I complex. In Synechococcus sp. (strain ATCC 27144 / PCC 6301 / SAUG 1402/1) (Anacystis nidulans), this protein is Photosystem I assembly protein Ycf4.